We begin with the raw amino-acid sequence, 218 residues long: Pyridoxal phosphate homeostasis protein (218 aa).

At Lys25 the chain carries N6-(pyridoxal phosphate)lysine.

Belongs to the pyridoxal phosphate-binding protein YggS/PROSC family.

Pyridoxal 5'-phosphate (PLP)-binding protein, which is involved in PLP homeostasis. This is Pyridoxal phosphate homeostasis protein from Synechocystis sp. (strain ATCC 27184 / PCC 6803 / Kazusa).